The primary structure comprises 67 residues: Large ribosomal subunit protein bL35 (67 aa).

This sequence belongs to the bacterial ribosomal protein bL35 family.

The protein is Large ribosomal subunit protein bL35 of Acidiphilium cryptum (strain JF-5).